A 91-amino-acid chain; its full sequence is uncharacterized protein (91 aa).

The protein belongs to the FrmR/RcnR family.

It localises to the cytoplasm. This is an uncharacterized protein from Serratia marcescens.